Here is a 316-residue protein sequence, read N- to C-terminus: Acetaldehyde dehydrogenase 1 (316 aa).

Position 12–15 (12–15 (SGNI)) interacts with NAD(+). Cys-132 (acyl-thioester intermediate) is an active-site residue. Residues 163–171 (SAGPGTRAN) and Asn-291 contribute to the NAD(+) site.

The protein belongs to the acetaldehyde dehydrogenase family.

It catalyses the reaction acetaldehyde + NAD(+) + CoA = acetyl-CoA + NADH + H(+). The sequence is that of Acetaldehyde dehydrogenase 1 from Pseudomonas putida (strain ATCC 700007 / DSM 6899 / JCM 31910 / BCRC 17059 / LMG 24140 / F1).